We begin with the raw amino-acid sequence, 188 residues long: Elongation factor P (188 aa).

The tract at residues 139-163 (PVTKGQTASSSYKPATLSNGVRTQV) is disordered. Residues 142 to 160 (KGQTASSSYKPATLSNGVR) are compositionally biased toward polar residues.

Belongs to the elongation factor P family.

The protein resides in the cytoplasm. It functions in the pathway protein biosynthesis; polypeptide chain elongation. Its function is as follows. Involved in peptide bond synthesis. Stimulates efficient translation and peptide-bond synthesis on native or reconstituted 70S ribosomes in vitro. Probably functions indirectly by altering the affinity of the ribosome for aminoacyl-tRNA, thus increasing their reactivity as acceptors for peptidyl transferase. The sequence is that of Elongation factor P from Methylobacterium nodulans (strain LMG 21967 / CNCM I-2342 / ORS 2060).